Reading from the N-terminus, the 332-residue chain is DNA-directed RNA polymerase subunit alpha (332 aa).

Positions 1–226 are alpha N-terminal domain (alpha-NTD); the sequence is MLIAQRPTLT…ELFGLARELN (226 aa). The tract at residues 243-332 is alpha C-terminal domain (alpha-CTD); the sequence is LSSELSMPIE…GYDEDESTTI (90 aa).

The protein belongs to the RNA polymerase alpha chain family. Homodimer. The RNAP catalytic core consists of 2 alpha, 1 beta, 1 beta' and 1 omega subunit. When a sigma factor is associated with the core the holoenzyme is formed, which can initiate transcription.

The catalysed reaction is RNA(n) + a ribonucleoside 5'-triphosphate = RNA(n+1) + diphosphate. In terms of biological role, DNA-dependent RNA polymerase catalyzes the transcription of DNA into RNA using the four ribonucleoside triphosphates as substrates. This chain is DNA-directed RNA polymerase subunit alpha, found in Leifsonia xyli subsp. xyli (strain CTCB07).